Reading from the N-terminus, the 360-residue chain is 3-dehydroquinate synthase (360 aa).

NAD(+)-binding positions include 72-77 (DGEEFK), 106-110 (GVVGD), 130-131 (TT), lysine 143, lysine 152, and 170-173 (TLTT). Residues glutamate 185, histidine 248, and histidine 265 each coordinate Zn(2+).

This sequence belongs to the sugar phosphate cyclases superfamily. Dehydroquinate synthase family. Co(2+) serves as cofactor. Zn(2+) is required as a cofactor. The cofactor is NAD(+).

The protein resides in the cytoplasm. The enzyme catalyses 7-phospho-2-dehydro-3-deoxy-D-arabino-heptonate = 3-dehydroquinate + phosphate. The protein operates within metabolic intermediate biosynthesis; chorismate biosynthesis; chorismate from D-erythrose 4-phosphate and phosphoenolpyruvate: step 2/7. Its function is as follows. Catalyzes the conversion of 3-deoxy-D-arabino-heptulosonate 7-phosphate (DAHP) to dehydroquinate (DHQ). This is 3-dehydroquinate synthase from Geobacter metallireducens (strain ATCC 53774 / DSM 7210 / GS-15).